Reading from the N-terminus, the 186-residue chain is Large ribosomal subunit protein uL5m (186 aa).

It belongs to the universal ribosomal protein uL5 family.

It is found in the mitochondrion. In Solanum tuberosum (Potato), this protein is Large ribosomal subunit protein uL5m (RPL5).